Consider the following 427-residue polypeptide: 3-phosphoshikimate 1-carboxyvinyltransferase (427 aa).

3 residues coordinate 3-phosphoshikimate: Lys-20, Ser-21, and Arg-25. Position 20 (Lys-20) interacts with phosphoenolpyruvate. The phosphoenolpyruvate site is built by Gly-92 and Arg-120. 4 residues coordinate 3-phosphoshikimate: Ser-165, Gln-167, Asp-313, and Lys-340. Gln-167 lines the phosphoenolpyruvate pocket. Catalysis depends on Asp-313, which acts as the Proton acceptor. 2 residues coordinate phosphoenolpyruvate: Arg-344 and Arg-388.

Belongs to the EPSP synthase family. As to quaternary structure, monomer.

The protein localises to the cytoplasm. The enzyme catalyses 3-phosphoshikimate + phosphoenolpyruvate = 5-O-(1-carboxyvinyl)-3-phosphoshikimate + phosphate. Its pathway is metabolic intermediate biosynthesis; chorismate biosynthesis; chorismate from D-erythrose 4-phosphate and phosphoenolpyruvate: step 6/7. In terms of biological role, catalyzes the transfer of the enolpyruvyl moiety of phosphoenolpyruvate (PEP) to the 5-hydroxyl of shikimate-3-phosphate (S3P) to produce enolpyruvyl shikimate-3-phosphate and inorganic phosphate. This chain is 3-phosphoshikimate 1-carboxyvinyltransferase, found in Geobacillus kaustophilus (strain HTA426).